A 373-amino-acid chain; its full sequence is UDP-N-acetylglucosamine--N-acetylmuramyl-(pentapeptide) pyrophosphoryl-undecaprenol N-acetylglucosamine transferase (373 aa).

UDP-N-acetyl-alpha-D-glucosamine contacts are provided by residues 14-16, N128, R165, S199, and Q295; that span reads TAG.

Belongs to the glycosyltransferase 28 family. MurG subfamily.

Its subcellular location is the cell membrane. It carries out the reaction di-trans,octa-cis-undecaprenyl diphospho-N-acetyl-alpha-D-muramoyl-L-alanyl-D-glutamyl-meso-2,6-diaminopimeloyl-D-alanyl-D-alanine + UDP-N-acetyl-alpha-D-glucosamine = di-trans,octa-cis-undecaprenyl diphospho-[N-acetyl-alpha-D-glucosaminyl-(1-&gt;4)]-N-acetyl-alpha-D-muramoyl-L-alanyl-D-glutamyl-meso-2,6-diaminopimeloyl-D-alanyl-D-alanine + UDP + H(+). It participates in cell wall biogenesis; peptidoglycan biosynthesis. In terms of biological role, cell wall formation. Catalyzes the transfer of a GlcNAc subunit on undecaprenyl-pyrophosphoryl-MurNAc-pentapeptide (lipid intermediate I) to form undecaprenyl-pyrophosphoryl-MurNAc-(pentapeptide)GlcNAc (lipid intermediate II). This chain is UDP-N-acetylglucosamine--N-acetylmuramyl-(pentapeptide) pyrophosphoryl-undecaprenol N-acetylglucosamine transferase, found in Mycobacterium sp. (strain KMS).